A 488-amino-acid polypeptide reads, in one-letter code: Bifunctional protein HldE (488 aa).

Residues 1-332 (MRESFLDTIQ…QELQSQQSAA (332 aa)) form a ribokinase region. 208 to 211 (NKRE) provides a ligand contact to ATP. D277 is a catalytic residue. Residues 359–488 (FTNGCFDLLH…TSNIIRKLAS (130 aa)) form a cytidylyltransferase region.

In the N-terminal section; belongs to the carbohydrate kinase PfkB family. This sequence in the C-terminal section; belongs to the cytidylyltransferase family. As to quaternary structure, homodimer.

The catalysed reaction is D-glycero-beta-D-manno-heptose 7-phosphate + ATP = D-glycero-beta-D-manno-heptose 1,7-bisphosphate + ADP + H(+). It catalyses the reaction D-glycero-beta-D-manno-heptose 1-phosphate + ATP + H(+) = ADP-D-glycero-beta-D-manno-heptose + diphosphate. Its pathway is nucleotide-sugar biosynthesis; ADP-L-glycero-beta-D-manno-heptose biosynthesis; ADP-L-glycero-beta-D-manno-heptose from D-glycero-beta-D-manno-heptose 7-phosphate: step 1/4. The protein operates within nucleotide-sugar biosynthesis; ADP-L-glycero-beta-D-manno-heptose biosynthesis; ADP-L-glycero-beta-D-manno-heptose from D-glycero-beta-D-manno-heptose 7-phosphate: step 3/4. Catalyzes the phosphorylation of D-glycero-D-manno-heptose 7-phosphate at the C-1 position to selectively form D-glycero-beta-D-manno-heptose-1,7-bisphosphate. In terms of biological role, catalyzes the ADP transfer from ATP to D-glycero-beta-D-manno-heptose 1-phosphate, yielding ADP-D-glycero-beta-D-manno-heptose. This Methylobacillus flagellatus (strain ATCC 51484 / DSM 6875 / VKM B-1610 / KT) protein is Bifunctional protein HldE.